Reading from the N-terminus, the 83-residue chain is RNA-binding protein Hfq (83 aa).

The Sm domain occupies 10 to 70 (DAFLNQVRKE…ISTVSPLKPV (61 aa)).

It belongs to the Hfq family. As to quaternary structure, homohexamer.

RNA chaperone that binds small regulatory RNA (sRNAs) and mRNAs to facilitate mRNA translational regulation in response to envelope stress, environmental stress and changes in metabolite concentrations. Also binds with high specificity to tRNAs. The chain is RNA-binding protein Hfq from Pelotomaculum thermopropionicum (strain DSM 13744 / JCM 10971 / SI).